Consider the following 336-residue polypeptide: Di/tripeptide transport system permease protein DppB (336 aa).

6 helical membrane-spanning segments follow: residues 10-30 (GLLI…IRLI), 102-122 (LSLA…VIAA), 145-165 (IFWW…WTPV), 198-218 (AVRH…AVIA), 257-277 (LIPV…GAVL), and 307-327 (ILLV…LYGL). The ABC transmembrane type-1 domain occupies 96–325 (FPATLELSLA…LVNFVVDILY (230 aa)).

It belongs to the binding-protein-dependent transport system permease family. OppBC subfamily. As to quaternary structure, the complex is composed of two ATP-binding proteins (DppD and DppF), two transmembrane proteins (DppB and DppC) and a solute-binding protein (DppA1-A5). Five orthologous SBPs (DppA1-A5) are present in P.aeruginosa, which increases the substrate specificity of the DppBCDF transporter.

The protein resides in the cell inner membrane. Functionally, part of the ABC transporter DppABCDF involved in the uptake of various di/tripeptides. Is also involved in the uptake of phaseolotoxin, a toxic tripeptide inhibiting the enzyme ornithine carbamoyltransferase. Responsible for the translocation of the substrate across the membrane. This is Di/tripeptide transport system permease protein DppB from Pseudomonas aeruginosa (strain UCBPP-PA14).